Reading from the N-terminus, the 500-residue chain is NAD(P)H-quinone oxidoreductase chain 4, chloroplastic (500 aa).

The next 14 membrane-spanning stretches (helical) occupy residues 4–24 (FPWL…IFFL), 37–57 (ICIC…HFQL), 87–107 (IGPI…AWPI), 113–130 (LFHF…GSFS), 134–154 (LLLF…LLAM), 167–187 (FILY…GVAL), 208–228 (VLEI…LPII), 242–262 (HYST…YGLI), 272–292 (AHSI…IYAA), 305–325 (IAYS…SLTD), 330–350 (GALL…FLAG), 386–406 (LALP…GIIT), 411–431 (VLIP…LTPI), and 462–482 (LFLS…PDFV).

Belongs to the complex I subunit 4 family.

The protein resides in the plastid. It localises to the chloroplast thylakoid membrane. It carries out the reaction a plastoquinone + NADH + (n+1) H(+)(in) = a plastoquinol + NAD(+) + n H(+)(out). The enzyme catalyses a plastoquinone + NADPH + (n+1) H(+)(in) = a plastoquinol + NADP(+) + n H(+)(out). The sequence is that of NAD(P)H-quinone oxidoreductase chain 4, chloroplastic from Atropa belladonna (Belladonna).